We begin with the raw amino-acid sequence, 337 residues long: Ketol-acid reductoisomerase (NADP(+)) (337 aa).

Residues 3 to 183 enclose the KARI N-terminal Rossmann domain; the sequence is IDVFYDDDAD…GGGRAGVIPT (181 aa). NADP(+) is bound by residues 26–29, R49, S52, S54, and 84–87; these read YGSQ and DTSQ. Residue H109 is part of the active site. Residue G135 participates in NADP(+) binding. The KARI C-terminal knotted domain occupies 184–329; the sequence is TFEAETVTDL…EKLRDLMSWV (146 aa). Mg(2+)-binding residues include D192, E196, E228, and E232. Residue S253 coordinates substrate.

The protein belongs to the ketol-acid reductoisomerase family. The cofactor is Mg(2+).

It catalyses the reaction (2R)-2,3-dihydroxy-3-methylbutanoate + NADP(+) = (2S)-2-acetolactate + NADPH + H(+). It carries out the reaction (2R,3R)-2,3-dihydroxy-3-methylpentanoate + NADP(+) = (S)-2-ethyl-2-hydroxy-3-oxobutanoate + NADPH + H(+). It participates in amino-acid biosynthesis; L-isoleucine biosynthesis; L-isoleucine from 2-oxobutanoate: step 2/4. Its pathway is amino-acid biosynthesis; L-valine biosynthesis; L-valine from pyruvate: step 2/4. Involved in the biosynthesis of branched-chain amino acids (BCAA). Catalyzes an alkyl-migration followed by a ketol-acid reduction of (S)-2-acetolactate (S2AL) to yield (R)-2,3-dihydroxy-isovalerate. In the isomerase reaction, S2AL is rearranged via a Mg-dependent methyl migration to produce 3-hydroxy-3-methyl-2-ketobutyrate (HMKB). In the reductase reaction, this 2-ketoacid undergoes a metal-dependent reduction by NADPH to yield (R)-2,3-dihydroxy-isovalerate. The chain is Ketol-acid reductoisomerase (NADP(+)) from Corynebacterium urealyticum (strain ATCC 43042 / DSM 7109).